We begin with the raw amino-acid sequence, 291 residues long: 33 kDa chaperonin (291 aa).

Cystine bridges form between cysteine 237-cysteine 239 and cysteine 270-cysteine 273.

Belongs to the HSP33 family. Under oxidizing conditions two disulfide bonds are formed involving the reactive cysteines. Under reducing conditions zinc is bound to the reactive cysteines and the protein is inactive.

It is found in the cytoplasm. Redox regulated molecular chaperone. Protects both thermally unfolding and oxidatively damaged proteins from irreversible aggregation. Plays an important role in the bacterial defense system toward oxidative stress. This chain is 33 kDa chaperonin, found in Bacillus anthracis (strain A0248).